Here is a 151-residue protein sequence, read N- to C-terminus: NAD(P)H-quinone oxidoreductase subunit N (151 aa).

The protein belongs to the complex I NdhN subunit family. NDH-1 can be composed of about 15 different subunits; different subcomplexes with different compositions have been identified which probably have different functions.

It is found in the cellular thylakoid membrane. The enzyme catalyses a plastoquinone + NADH + (n+1) H(+)(in) = a plastoquinol + NAD(+) + n H(+)(out). The catalysed reaction is a plastoquinone + NADPH + (n+1) H(+)(in) = a plastoquinol + NADP(+) + n H(+)(out). In terms of biological role, NDH-1 shuttles electrons from an unknown electron donor, via FMN and iron-sulfur (Fe-S) centers, to quinones in the respiratory and/or the photosynthetic chain. The immediate electron acceptor for the enzyme in this species is believed to be plastoquinone. Couples the redox reaction to proton translocation, and thus conserves the redox energy in a proton gradient. Cyanobacterial NDH-1 also plays a role in inorganic carbon-concentration. The chain is NAD(P)H-quinone oxidoreductase subunit N from Acaryochloris marina (strain MBIC 11017).